The primary structure comprises 465 residues: Sensor histidine kinase ZraS (465 aa).

Over 1–14 (MSFIRLHKDAAATW) the chain is Cytoplasmic. Residues 15 to 35 (LSRLLPAAIFILVGLFSIMVI) traverse the membrane as a helical segment. Topologically, residues 36 to 202 (RDYGRESAAA…AATQAREWRN (167 aa)) are periplasmic. A helical transmembrane segment spans residues 203 to 223 (TLIVLSALAAVLLATLLAFFW). Topologically, residues 224–465 (HQRYQRSHRE…WLPVIARQQD (242 aa)) are cytoplasmic. The Histidine kinase domain maps to 253-461 (GVAHEIRNPL…VFTIWLPVIA (209 aa)). A Phosphohistidine; by autocatalysis modification is found at His256.

Post-translationally, autophosphorylated.

It is found in the cell inner membrane. It carries out the reaction ATP + protein L-histidine = ADP + protein N-phospho-L-histidine.. Activity of the ZraS/ZraR two-component system is repressed by the zinc-bound form of ZraP, which probably interacts with the periplasmic region of ZraS. Its function is as follows. Part of the Zra signaling pathway, an envelope stress response (ESR) system composed of the periplasmic accessory protein ZraP, the histidine kinase ZraS and the transcriptional regulator ZraR. The ZraPSR system contributes to antibiotic resistance and is important for membrane integrity in the presence of membrane-targeting biocides. ZraS is a member of the two-component regulatory system ZraS/ZraR. Functions as a membrane-associated sensor kinase that phosphorylates ZraR in response to high concentrations of Zn(2+) or Pb(2+) in the medium. The chain is Sensor histidine kinase ZraS from Salmonella typhimurium (strain LT2 / SGSC1412 / ATCC 700720).